Here is a 182-residue protein sequence, read N- to C-terminus: Bis(5'-nucleosyl)-tetraphosphatase [asymmetrical] (182 aa).

The 108-residue stretch at Lys-3 to Glu-110 folds into the HIT domain. Residues Asn-28, Gln-84, and Gly-90–Val-93 contribute to the substrate site. The Histidine triad motif signature appears at His-95 to His-99. Residue His-97 is the Tele-AMP-histidine intermediate of the active site. His-99 is a binding site for substrate. The tract at residues Arg-135–Leu-161 is disordered. The segment covering Ile-150–Leu-161 has biased composition (basic and acidic residues).

The enzyme catalyses P(1),P(4)-bis(5'-guanosyl) tetraphosphate + H2O = GMP + GTP + 2 H(+). Its function is as follows. Asymmetrically hydrolyzes Ap4A to yield AMP and ATP. The sequence is that of Bis(5'-nucleosyl)-tetraphosphatase [asymmetrical] (aph1) from Schizosaccharomyces pombe (strain 972 / ATCC 24843) (Fission yeast).